Consider the following 373-residue polypeptide: MSVRRHIGNPEYLTRRIPQNPRYQHVKSRLDTGNSMTKYIEKLEEIKKNYRYKKDELFKRLKVTTFAQLVIQVASLSDQTLEVTAEEIQRLEDNDSATSEPDAEITAKTNGNGSPGEQSPSPVQFINSEGAGDFSRSTLQSVISGVGELDLDKGLVKKTEPNTKDKPYPDCPFLLLDVRDRDSYQQCHIVGAYSYPIATLSRTMNPYSNDILEYKNAHGKIIILYDDDERLASQAATTMCERGFENLFMLSGGLKVLAQKFPEGLITGSLPASCQQALPPGSARKRSSPKVPPLPAENKWRFTPEDLKKIEYYLEEDQGPADNPSRLSQANASGRDAKVPGTRSGQNLPAGGPASHQNPRSLGSGHLQGKPWK.

The interval 89–127 (QRLEDNDSATSEPDAEITAKTNGNGSPGEQSPSPVQFIN) is disordered. 2 positions are modified to phosphoserine: S96 and S99. Over residues 107–127 (AKTNGNGSPGEQSPSPVQFIN) the composition is skewed to polar residues. T109 is subject to Phosphothreonine. Phosphoserine is present on residues S114 and S121. One can recognise a Rhodanese domain in the interval 169–266 (PDCPFLLLDV…LAQKFPEGLI (98 aa)). Disordered stretches follow at residues 275–300 (QQAL…ENKW) and 315–373 (EEDQ…KPWK). The residue at position 343 (R343) is an Omega-N-methylarginine.

The protein belongs to the CEP41 family. Found in a complex with TTLL6.

The protein localises to the cytoplasm. Its subcellular location is the cytoskeleton. It is found in the microtubule organizing center. It localises to the centrosome. The protein resides in the cell projection. The protein localises to the cilium. Its subcellular location is the cilium basal body. Required during ciliogenesis for tubulin glutamylation in cilium. Probably acts by participating in the transport of TTLL6, a tubulin polyglutamylase, between the basal body and the cilium. The polypeptide is Centrosomal protein of 41 kDa (CEP41) (Bos taurus (Bovine)).